Here is a 418-residue protein sequence, read N- to C-terminus: Hydroxysqualene dehydroxylase (418 aa).

It belongs to the HpnE family.

The catalysed reaction is squalene + FAD + H2O + H(+) = hydroxysqualene + FADH2. It functions in the pathway secondary metabolite biosynthesis; hopanoid biosynthesis. Involved in the biosynthesis of the hopanoid precursor squalene (SQ) from farnesyl diphosphate (FPP). Catalyzes the third (last) step, the reduction of hydroxysqualene (HSQ) to SQ. The sequence is that of Hydroxysqualene dehydroxylase from Rhodopseudomonas palustris (strain ATCC BAA-98 / CGA009).